Consider the following 212-residue polypeptide: Thymidylate kinase (212 aa).

10-17 is an ATP binding site; sequence GPEGAGKT.

Belongs to the thymidylate kinase family.

It catalyses the reaction dTMP + ATP = dTDP + ADP. Functionally, phosphorylation of dTMP to form dTDP in both de novo and salvage pathways of dTTP synthesis. This chain is Thymidylate kinase, found in Bacillus licheniformis (strain ATCC 14580 / DSM 13 / JCM 2505 / CCUG 7422 / NBRC 12200 / NCIMB 9375 / NCTC 10341 / NRRL NRS-1264 / Gibson 46).